The following is a 205-amino-acid chain: High frequency lysogenization protein HflD homolog (205 aa).

It belongs to the HflD family.

The protein localises to the cytoplasm. It localises to the cell inner membrane. The chain is High frequency lysogenization protein HflD homolog from Hahella chejuensis (strain KCTC 2396).